A 173-amino-acid polypeptide reads, in one-letter code: NADH-ubiquinone oxidoreductase chain 6 (173 aa).

5 consecutive transmembrane segments (helical) span residues 1–21, 27–47, 48–68, 87–107, and 139–159; these read MTYF…AVAS, YGVV…MSLG, MSFV…VVFV, VVGY…VGGL, and CGVG…FVVL.

This sequence belongs to the complex I subunit 6 family.

It is found in the mitochondrion membrane. It carries out the reaction a ubiquinone + NADH + 5 H(+)(in) = a ubiquinol + NAD(+) + 4 H(+)(out). Core subunit of the mitochondrial membrane respiratory chain NADH dehydrogenase (Complex I) that is believed to belong to the minimal assembly required for catalysis. Complex I functions in the transfer of electrons from NADH to the respiratory chain. The immediate electron acceptor for the enzyme is believed to be ubiquinone. The sequence is that of NADH-ubiquinone oxidoreductase chain 6 (MT-ND6) from Synthliboramphus antiquus (Ancient murrelet).